A 258-amino-acid chain; its full sequence is Ciliogenesis and planar polarity effector 2 (258 aa).

The interval 51–258 (IDTASYKIFV…LPSSPESAPG (208 aa)) is small GTPase-like. GTP is bound by residues serine 64, glycine 65, glycine 67, lysine 68, threonine 69, alanine 70, isoleucine 82, histidine 84, threonine 87, lysine 176, aspartate 178, and serine 206.

This sequence belongs to the small GTPase superfamily. Rab family. As to quaternary structure, interacts with FUZ. Associates with the CPLANE (ciliogenesis and planar polarity effectors) complex via its interaction with FUZ.

Its subcellular location is the cytoplasm. The protein resides in the cytoskeleton. It is found in the cilium basal body. The protein localises to the microtubule organizing center. It localises to the centrosome. Its subcellular location is the centriole. Its function is as follows. Required for efficient primary cilia initiation, regulating a late step in cilia initiation. Plays a role in the final maturation of the mother centriole and ciliary vesicle that allows extension of the ciliary axoneme. The chain is Ciliogenesis and planar polarity effector 2 (Cplane2) from Mus musculus (Mouse).